An 87-amino-acid polypeptide reads, in one-letter code: Large ribosomal subunit protein bL28 (87 aa).

This sequence belongs to the bacterial ribosomal protein bL28 family.

The polypeptide is Large ribosomal subunit protein bL28 (Methylacidiphilum infernorum (isolate V4) (Methylokorus infernorum (strain V4))).